Here is a 243-residue protein sequence, read N- to C-terminus: 1-(5-phosphoribosyl)-5-[(5-phosphoribosylamino)methylideneamino] imidazole-4-carboxamide isomerase (243 aa).

The active-site Proton acceptor is Asp-8. Asp-129 functions as the Proton donor in the catalytic mechanism.

It belongs to the HisA/HisF family.

Its subcellular location is the cytoplasm. The enzyme catalyses 1-(5-phospho-beta-D-ribosyl)-5-[(5-phospho-beta-D-ribosylamino)methylideneamino]imidazole-4-carboxamide = 5-[(5-phospho-1-deoxy-D-ribulos-1-ylimino)methylamino]-1-(5-phospho-beta-D-ribosyl)imidazole-4-carboxamide. The protein operates within amino-acid biosynthesis; L-histidine biosynthesis; L-histidine from 5-phospho-alpha-D-ribose 1-diphosphate: step 4/9. The polypeptide is 1-(5-phosphoribosyl)-5-[(5-phosphoribosylamino)methylideneamino] imidazole-4-carboxamide isomerase (Nitratidesulfovibrio vulgaris (strain DSM 19637 / Miyazaki F) (Desulfovibrio vulgaris)).